A 639-amino-acid chain; its full sequence is Extracellular metalloproteinase 1 (639 aa).

An N-terminal signal peptide occupies residues 1-19 (MHGLLLAAGLISLPLHVLA). Positions 20–250 (HPQPSSTSLA…VHNVVDYVAH (231 aa)) are excised as a propeptide. Asn-291 carries N-linked (GlcNAc...) asparagine glycosylation. His-434 serves as a coordination point for Zn(2+). Residue Glu-435 is part of the active site. Residue His-438 coordinates Zn(2+). Asn-598 is a glycosylation site (N-linked (GlcNAc...) asparagine).

It belongs to the peptidase M36 family. Requires Zn(2+) as cofactor.

Its subcellular location is the secreted. Secreted metalloproteinase probably acting as a virulence factor. This chain is Extracellular metalloproteinase 1 (MEP1), found in Arthroderma otae (strain ATCC MYA-4605 / CBS 113480) (Microsporum canis).